The primary structure comprises 245 residues: 1-(5-phosphoribosyl)-5-[(5-phosphoribosylamino)methylideneamino] imidazole-4-carboxamide isomerase (245 aa).

Residue D8 is the Proton acceptor of the active site. D130 acts as the Proton donor in catalysis.

The protein belongs to the HisA/HisF family.

It localises to the cytoplasm. The catalysed reaction is 1-(5-phospho-beta-D-ribosyl)-5-[(5-phospho-beta-D-ribosylamino)methylideneamino]imidazole-4-carboxamide = 5-[(5-phospho-1-deoxy-D-ribulos-1-ylimino)methylamino]-1-(5-phospho-beta-D-ribosyl)imidazole-4-carboxamide. It participates in amino-acid biosynthesis; L-histidine biosynthesis; L-histidine from 5-phospho-alpha-D-ribose 1-diphosphate: step 4/9. The protein is 1-(5-phosphoribosyl)-5-[(5-phosphoribosylamino)methylideneamino] imidazole-4-carboxamide isomerase of Azotobacter vinelandii (strain DJ / ATCC BAA-1303).